Here is a 240-residue protein sequence, read N- to C-terminus: Ubiquinone biosynthesis O-methyltransferase (240 aa).

R44, G64, D85, and M129 together coordinate S-adenosyl-L-methionine.

This sequence belongs to the methyltransferase superfamily. UbiG/COQ3 family.

It catalyses the reaction a 3-demethylubiquinol + S-adenosyl-L-methionine = a ubiquinol + S-adenosyl-L-homocysteine + H(+). It carries out the reaction a 3-(all-trans-polyprenyl)benzene-1,2-diol + S-adenosyl-L-methionine = a 2-methoxy-6-(all-trans-polyprenyl)phenol + S-adenosyl-L-homocysteine + H(+). It participates in cofactor biosynthesis; ubiquinone biosynthesis. Functionally, O-methyltransferase that catalyzes the 2 O-methylation steps in the ubiquinone biosynthetic pathway. This is Ubiquinone biosynthesis O-methyltransferase from Escherichia coli (strain ATCC 8739 / DSM 1576 / NBRC 3972 / NCIMB 8545 / WDCM 00012 / Crooks).